The sequence spans 482 residues: Putative alpha-L-fucosidase (482 aa).

A signal peptide spans 1–16; the sequence is MIFLIFSILFLHLANC. N-linked (GlcNAc...) asparagine glycans are attached at residues Asn182, Asn343, Asn359, and Asn419.

This sequence belongs to the glycosyl hydrolase 29 family.

The catalysed reaction is an alpha-L-fucoside + H2O = L-fucose + an alcohol. Functionally, alpha-L-fucosidase is responsible for hydrolyzing the alpha-1,6-linked fucose joined to the reducing-end N-acetylglucosamine of the carbohydrate moieties of glycoproteins. The protein is Putative alpha-L-fucosidase of Caenorhabditis elegans.